The following is a 224-amino-acid chain: UPF0173 metal-dependent hydrolase Memar_1421 (224 aa).

It belongs to the UPF0173 family.

This chain is UPF0173 metal-dependent hydrolase Memar_1421, found in Methanoculleus marisnigri (strain ATCC 35101 / DSM 1498 / JR1).